Here is a 408-residue protein sequence, read N- to C-terminus: Phosphoenolpyruvate/phosphate translocator 1, chloroplastic (408 aa).

A chloroplast-targeting transit peptide spans 1–85 (MQSSAVFSLS…SLDTNRFRTA (85 aa)). Alanine 86 is subject to N-acetylalanine. A run of 8 helical transmembrane segments spans residues 105 to 125 (VLEL…FNIY), 137 to 157 (MTVT…MWVL), 165 to 185 (ISGA…LGNL), 198 to 218 (FTHT…AMFL), 222 to 242 (PTPW…LASI), 283 to 303 (ITLF…VTFF), 324 to 346 (IYTK…YMIL), and 377 to 396 (VSPV…FLYS). The 118-residue stretch at 124–241 (IYNKQVLKAL…PIVGGVALAS (118 aa)) folds into the EamA domain.

The protein belongs to the TPT transporter family. PPT (TC 2.A.7.9) subfamily. In terms of tissue distribution, expressed in root columella, lateral root cap and root vasculature tissue. In leaves, highly expressed in xylem parenchyma cells. In flowers, expressed in sepals, petals, filaments of the stamens, anthers and stigma.

Its subcellular location is the plastid. It localises to the chloroplast membrane. Functionally, phosphoenolpyruvate/phosphate translocator that transports phosphoenolpyruvate (PEP), 2-phosphoglycerate, 3-phosphoglycerate and dihydroxyacetone phosphate. Imports PEP to the chloroplast stroma as one substrate of the shikimate pathway, from which aromatic amino acids and a variety of secondary products derive. Required for correct leaf mesophyll cell development and expression of chlorophyll a/b binding protein 3 (CAB3). The sequence is that of Phosphoenolpyruvate/phosphate translocator 1, chloroplastic (PPT1) from Arabidopsis thaliana (Mouse-ear cress).